The sequence spans 77 residues: Acyl carrier protein (77 aa).

One can recognise a Carrier domain in the interval 2–77 (ADTLSRITKI…DVVEYIEGRQ (76 aa)). Position 37 is an O-(pantetheine 4'-phosphoryl)serine (Ser-37).

It belongs to the acyl carrier protein (ACP) family. Post-translationally, 4'-phosphopantetheine is transferred from CoA to a specific serine of apo-ACP by AcpS. This modification is essential for activity because fatty acids are bound in thioester linkage to the sulfhydryl of the prosthetic group.

It is found in the cytoplasm. It functions in the pathway lipid metabolism; fatty acid biosynthesis. Its function is as follows. Carrier of the growing fatty acid chain in fatty acid biosynthesis. The chain is Acyl carrier protein from Halalkalibacterium halodurans (strain ATCC BAA-125 / DSM 18197 / FERM 7344 / JCM 9153 / C-125) (Bacillus halodurans).